Here is a 459-residue protein sequence, read N- to C-terminus: DNA primase large subunit (459 aa).

Residues Cys-291, Cys-369, Cys-386, and Cys-428 each contribute to the [4Fe-4S] cluster site.

Belongs to the eukaryotic-type primase large subunit family. In terms of assembly, heterodimer of a catalytic subunit spp1/pri1 and a regulatory subunit spp2/pri2, also known as the DNA primase complex. Component of the alpha DNA polymerase complex (also known as the alpha DNA polymerase-primase complex) consisting of four subunits: the catalytic subunit pol1, the accessory subunit spb70/pol12, and the primase complex subunits spp1/pri1 and spp2/pri2 respectively. Interacts with orc2; preferentially associates with the unphosphorylated orc2 in G1 pre-Start prior to orc2 being phosphorylated by cdc2, the interaction is mediated by spb70 and might enable the association of the whole alpha DNA polymerase complex to orc2/spb70 complex on chromatin. The cofactor is [4Fe-4S] cluster.

The protein resides in the nucleus. The protein localises to the chromosome. In terms of biological role, regulatory subunit of the DNA primase complex and component of the DNA polymerase alpha complex (also known as the alpha DNA polymerase-primase complex - primosome/replisome) which play an essential role in the initiation of DNA synthesis. During the S phase of the cell cycle, the DNA polymerase alpha complex (composed of a catalytic subunit pol1, an accessory subunit spb70/pol12 and two primase subunits, the catalytic subunit spp1/pri1 and the regulatory subunit spp2/pri2) is recruited to DNA at the replicative forks. The primase subunit of the polymerase alpha complex initiates DNA synthesis by oligomerising short RNA primers on both leading and lagging strands. The protein is DNA primase large subunit of Schizosaccharomyces pombe (strain 972 / ATCC 24843) (Fission yeast).